A 289-amino-acid polypeptide reads, in one-letter code: MSAKILDGKALAGRLQAEMAAQVQAWLPRVGRPPGLAVLRVGEDPASAAYVRGKERACERVGIASFGRHFSAQDSPAHLLDAIAQLNQDERVDGILVQLPLPPGWDPIPPLLAIDPAKDVDGLHPLNLGRLVRGEPGLRSCTPLGVMRLLQAEGIPIAGRKAVVVGRSLLVGKPLSLMLLAADATVTVAHSRTPNLAEVTRSADIVVMAVGRPRLLTADMVKPGAVVVDVGINRIQDPDGSEQLVGDVDYEAVKERAAAITPVPGGVGPMTVTMLLANTLESYKLRSHL.

Residues 166-168 (GRS), serine 191, and isoleucine 232 contribute to the NADP(+) site.

It belongs to the tetrahydrofolate dehydrogenase/cyclohydrolase family. Homodimer.

The enzyme catalyses (6R)-5,10-methylene-5,6,7,8-tetrahydrofolate + NADP(+) = (6R)-5,10-methenyltetrahydrofolate + NADPH. The catalysed reaction is (6R)-5,10-methenyltetrahydrofolate + H2O = (6R)-10-formyltetrahydrofolate + H(+). It functions in the pathway one-carbon metabolism; tetrahydrofolate interconversion. Its function is as follows. Catalyzes the oxidation of 5,10-methylenetetrahydrofolate to 5,10-methenyltetrahydrofolate and then the hydrolysis of 5,10-methenyltetrahydrofolate to 10-formyltetrahydrofolate. The chain is Bifunctional protein FolD from Synechococcus sp. (strain JA-3-3Ab) (Cyanobacteria bacterium Yellowstone A-Prime).